Consider the following 517-residue polypeptide: Cytochrome P450 monooxygenase sdnE (517 aa).

A helical transmembrane segment spans residues 4-24 (SSILQTLAVLYVLYLLGLIIY). N111 is a glycosylation site (N-linked (GlcNAc...) asparagine). The chain crosses the membrane as a helical span at residues 219 to 239 (FPVVFIILGLSPRAMLKLVVP). C456 lines the heme pocket.

The protein belongs to the cytochrome P450 family. It depends on heme as a cofactor.

The protein resides in the membrane. The protein operates within antibiotic biosynthesis. Functionally, cytochrome P450 monooxygenase; part of the gene cluster that mediates the biosynthesis of sordarin and hypoxysordarin, glycoside antibiotics with a unique tetracyclic diterpene aglycone structure. First, the geranylgeranyl diphosphate synthase sdnC constructs GGDP from farnesyl diphosphate and isopentenyl diphosphate. The diterpene cyclase sdnA then catalyzes the cyclization of GGDP to afford cycloaraneosene. Cycloaraneosene is then hydroxylated four times by the putative cytochrome P450 monooxygenases sdnB, sdnE, sdnF and sdnH to give a hydroxylated cycloaraneosene derivative such as cycloaraneosene-8,9,13,19-tetraol. Although the order of the hydroxylations is unclear, at least C8, C9 and C13 of the cycloaraneosene skeleton are hydroxylated before the sordaricin formation. Dehydration of the 13-hydroxy group of the hydroxylated cycloaraneosene derivative might be catalyzed by an unassigned hypothetical protein such as sdnG and sdnP to construct the cyclopentadiene moiety. The FAD-dependent oxidoreductase sdnN is proposed to catalyze the oxidation at C9 of the hydroxylated cycloaraneosene derivative and also catalyze the Baeyer-Villiger oxidation to give the lactone intermediate. The presumed lactone intermediate would be hydrolyzed to give an acrolein moiety and a carboxylate moiety. Then, [4+2]cycloaddition would occur between the acrolein moiety and the cyclopentadiene moiety to give sordaricin. SdnN might also be involved in the [4+2]cycloaddition after the hypothesized oxidation to accommodate the oxidized product and prompt the [4+2]cycloaddition. GDP-6-deoxy-D-altrose may be biosynthesized from GDP-D-mannose by the putative GDP-mannose-4,6-dehydratase sdnI and the short-chain dehydrogenase sdnK. The glycosyltransferase sdnJ catalyzes the attachment of 6-deoxy-D-altrose onto the 19-hydroxy group of sordaricin to give 4'-O-demethylsordarin. The methyltransferase sdnD would complete the biosynthesis of sordarin. Sordarin can be further modified into hypoxysordarin. The unique acyl chain at the 3'-hydroxy group of hypoxysordarin would be constructed by an iterative type I PKS sdnO and the trans-acting polyketide methyltransferase sdnL. SdnL would be responsible for the introduction of an alpha-methyl group of the polyketide chain. Alternatively, the beta-lactamase-like protein sdnR might be responsible for the cleavage and transfer of the polyketide chain from the PKS sdnO to sordarin. Two putative cytochrome P450 monooxygenases, sdnQ and sdnT, might catalyze the epoxidations of the polyketide chain to complete the biosynthesis of hypoxysordarin. Transcriptional regulators sdnM and sdnS are presumably encoded for the transcriptional regulation of the expression of the sdn gene cluster. In Sordaria araneosa (Pleurage araneosa), this protein is Cytochrome P450 monooxygenase sdnE.